Here is a 314-residue protein sequence, read N- to C-terminus: Very long chain fatty acid elongase 4 (314 aa).

The N-linked (GlcNAc...) asparagine glycan is linked to Asn-20. The next 7 membrane-spanning stretches (helical) occupy residues Leu-42–Leu-62, Val-78–Phe-98, Ala-127–Leu-147, Met-165–Ala-185, Asn-188–Ile-208, Tyr-217–Leu-237, and Met-247–Ile-267. The segment at Lys-274 to Asp-314 is disordered. Over residues Lys-293–Lys-304 the composition is skewed to basic and acidic residues. A compositionally biased stretch (basic residues) spans Lys-305–Asp-314. Positions Lys-310–Asp-314 match the Di-lysine motif motif.

Belongs to the ELO family. ELOVL4 subfamily. Oligomer. In terms of processing, N-glycosylated. In terms of tissue distribution, expressed mainly in retina. Also expressed in skin and thymus.

The protein localises to the endoplasmic reticulum membrane. The enzyme catalyses a very-long-chain acyl-CoA + malonyl-CoA + H(+) = a very-long-chain 3-oxoacyl-CoA + CO2 + CoA. It carries out the reaction hexacosanoyl-CoA + malonyl-CoA + H(+) = 3-oxooctacosanyol-CoA + CO2 + CoA. The catalysed reaction is octacosanoyl-CoA + malonyl-CoA + H(+) = 3-oxo-triacontanoyl-CoA + CO2 + CoA. It catalyses the reaction triacontanoyl-CoA + malonyl-CoA + H(+) = 3-oxo-dotriacontanoyl-CoA + CO2 + CoA. The enzyme catalyses (19Z,22Z,25Z,28Z,31Z)-tetratriacontapentaenoyl-CoA + malonyl-CoA + H(+) = 3-oxo-(21Z,24Z,27Z,30Z,33Z)-hexatriacontapentaenoyl-CoA + CO2 + CoA. It carries out the reaction (4Z,7Z,10Z,13Z,16Z,19Z)-docosahexaenoyl-CoA + malonyl-CoA + H(+) = 3-oxo-(6Z,9Z,12Z,15Z,18Z,21Z)-tetracosahexaenoyl-CoA + CO2 + CoA. The catalysed reaction is (7Z,10Z,13Z,16Z)-docosatetraenoyl-CoA + malonyl-CoA + H(+) = (9Z,12Z,15Z,18Z)-3-oxotetracosatetraenoyl-CoA + CO2 + CoA. It catalyses the reaction (11Z,14Z,17Z,20Z,23Z)-hexacosapentaenoyl-CoA + malonyl-CoA + H(+) = 3-oxo-(13Z,16Z,19Z,22Z,25Z)-octacosapentaenoyl-CoA + CO2 + CoA. The enzyme catalyses (13Z,16Z,19Z,22Z,25Z)-octacosapentaenoyl-CoA + malonyl-CoA + H(+) = 3-oxo-(15Z,18Z,21Z,24Z,27Z)-triacontapentaenoyl-CoA + CO2 + CoA. It carries out the reaction (15Z,18Z,21Z,24Z,27Z)-triacontapentaenoyl-CoA + malonyl-CoA + H(+) = 3-oxo-(17Z,20Z,23Z,26Z,29Z)-dotriacontapentaenoyl-CoA + CO2 + CoA. The catalysed reaction is (17Z,20Z,23Z,26Z,29Z)-dotriacontapentaenoyl-CoA + malonyl-CoA + H(+) = 3-oxo-(19Z,22Z,25Z,28Z,31Z)-tetratriacontapentaenoyl-CoA + CO2 + CoA. It catalyses the reaction (21Z,24Z,27Z,30Z,33Z)-hexatriacontapentaenoyl-CoA + malonyl-CoA + H(+) = 3-oxo-(23Z,26Z,29Z,32Z,35Z)-octatriacontapentaenoyl-CoA + CO2 + CoA. The enzyme catalyses (11Z,14Z,17Z,20Z)-hexacosatetraenoyl-CoA + malonyl-CoA + H(+) = (13Z,16Z,19Z,22Z)-3-oxooctacosatetraenoyl-CoA + CO2 + CoA. It carries out the reaction (13Z,16Z,19Z,22Z)-octacosatetraenoyl-CoA + malonyl-CoA + H(+) = 3-oxo-(15Z,18Z,21Z,24Z)-triacontatetraenoyl-CoA + CO2 + CoA. The catalysed reaction is (15Z,18Z,21Z,24Z)-triacontatetraenoyl-CoA + malonyl-CoA + H(+) = 3-oxo-(17Z,20Z,23Z,26Z)-dotriacontatetraenoyl-CoA + CO2 + CoA. It catalyses the reaction (17Z,20Z,23Z,26Z)-dotriacontatetraenoyl-CoA + malonyl-CoA + H(+) = 3-oxo-(19Z,22Z,25Z,28Z)-tetratriacontatetraenoyl-CoA + CO2 + CoA. The enzyme catalyses (19Z,22Z,25Z,28Z)-tetratriacontatetraenoyl-CoA + malonyl-CoA + H(+) = 3-oxo-(21Z,24Z,27Z,30Z)-hexatriacontatetraenoyl-CoA + CO2 + CoA. It carries out the reaction (21Z,24Z,27Z,30Z)-hexatriacontatetraenoyl-CoA + malonyl-CoA + H(+) = 3-oxo-(23Z,26Z,29Z,32Z)-octatriacontatetraenoyl-CoA + CO2 + CoA. The catalysed reaction is (6Z,9Z,12Z,15Z,18Z,21Z)-tetracosahexaenoyl-CoA + malonyl-CoA + H(+) = 3-oxo-(8Z,11Z,14Z,17Z,20Z,23Z)-hexacosahexaenoyl-CoA + CO2 + CoA. It catalyses the reaction (8Z,11Z,14Z,17Z,20Z,23Z)-hexacosahexaenoyl-CoA + malonyl-CoA + H(+) = 3-oxo-(10Z,13Z,16Z,19Z,22Z,25Z)-octacosahexaenoyl-CoA + CO2 + CoA. The enzyme catalyses (10Z,13Z,16Z,19Z,22Z,25Z)-octacosahexaenoyl-CoA + malonyl-CoA + H(+) = 3-oxo-(12Z,15Z,18Z,21Z,24Z,27Z)-triacontahexaenoyl-CoA + CO2 + CoA. It carries out the reaction (12Z,15Z,18Z,21Z,24Z,27Z)-triacontahexaenoyl-CoA + malonyl-CoA + H(+) = 3-oxo-(14Z,17Z,20Z,23Z,26Z,29Z)-dotriacontahexaenoyl-CoA + CO2 + CoA. The catalysed reaction is (14Z,17Z,20Z,23Z,26Z,29Z)-dotriacontahexaenoyl-CoA + malonyl-CoA + H(+) = 3-oxo-(16Z,19Z,22Z,25Z,28Z,31Z)-tetratriacontahexaenoyl-CoA + CO2 + CoA. It catalyses the reaction (16Z,19Z,22Z,25Z,28Z,31Z)-tetratriacontahexaenoyl-CoA + malonyl-CoA + H(+) = 3-oxo-(18Z,21Z,24Z,27Z,30Z,33Z)-hexatriacontahexaenoyl-CoA + CO2 + CoA. The enzyme catalyses (9Z,12Z,15Z,18Z,21Z)-tetracosapentaenoyl-CoA + malonyl-CoA + H(+) = 3-oxo-(11Z,14Z,17Z,20Z,23Z)-hexacosapentaenoyl-CoA + CO2 + CoA. Its pathway is lipid metabolism; fatty acid biosynthesis. Its function is as follows. Catalyzes the first and rate-limiting reaction of the four reactions that constitute the long-chain fatty acids elongation cycle. This endoplasmic reticulum-bound enzymatic process allows the addition of 2 carbons to the chain of long- and very long-chain fatty acids (VLCFAs) per cycle. Condensing enzyme that catalyzes the synthesis of very long chain saturated (VLC-SFA) and polyunsaturated (PUFA) fatty acids that are involved in multiple biological processes as precursors of membrane lipids and lipid mediators. May play a critical role in early brain and skin development. This is Very long chain fatty acid elongase 4 from Macaca fascicularis (Crab-eating macaque).